A 367-amino-acid chain; its full sequence is Endophilin-A2 (367 aa).

A membrane-binding amphipathic helix region spans residues 1–21; it reads MSVAGLKKQFYKASQLVSEKV. Residues 18-249 enclose the BAR domain; the sequence is SEKVGGAEGT…LKRRMREASS (232 aa). Residues 60–87 form a required for dimerization upon membrane association region; it reads PNPASRAKLTMLNTMSKIRGQVKNPGYP. Residues 181 to 250 are a coiled coil; sequence EELRQAMEKF…KRRMREASSR (70 aa). The interval 218–254 is interaction with ARC; sequence LVDAQLDYHRQAVQILDELAEKLKRRMREASSRPRRE. Residues 243-293 are disordered; sequence RMREASSRPRREYKPKPRETYDFGESDQSNGGFSCTPTPKVSASSSFRSDK. The segment covering 245–263 has biased composition (basic and acidic residues); sequence REASSRPRREYKPKPRETY. The segment covering 268–289 has biased composition (polar residues); sequence SDQSNGGFSCTPTPKVSASSSF. The SH3 domain maps to 305-364; the sequence is LDQPCCKALYDFEPENDGELGFKEGDIITLTNQIDENWYEGMINGQSGFFPLNYVEVLVP.

The protein belongs to the endophilin family. Interacts with ARC. Interacts with SYNJ1 and DNM1. In terms of tissue distribution, highest level in central region of the theca of developing follicles (at protein level). Expressed at highest level in brain and testis, at high level in kidney, lung and stroma, low level in spleen and adrenal gland (at protein level). Expressed in most tissue with highest levels in small ovarian follicles, brain and testis.

The protein resides in the cytoplasm. It localises to the early endosome membrane. Its subcellular location is the cell projection. It is found in the podosome. In terms of biological role, implicated in endocytosis. May recruit other proteins to membranes with high curvature. This is Endophilin-A2 from Gallus gallus (Chicken).